Here is a 380-residue protein sequence, read N- to C-terminus: Protein arginine N-methyltransferase PRMT10 (380 aa).

The SAM-dependent MTase PRMT-type domain occupies glutamate 26 to glutamate 357. 5 residues coordinate S-adenosyl-L-methionine: glutamine 42, arginine 51, glycine 75, glutamate 97, and glutamate 126. Residues glutamate 140 and glutamate 149 contribute to the active site. Residues glutamate 187–glutamate 227 are dimerization arm.

It belongs to the class I-like SAM-binding methyltransferase superfamily. Protein arginine N-methyltransferase family. Ring-like homodimer.

The enzyme catalyses L-arginyl-[protein] + 2 S-adenosyl-L-methionine = N(omega),N(omega)-dimethyl-L-arginyl-[protein] + 2 S-adenosyl-L-homocysteine + 2 H(+). Methylates (mono and asymmetric dimethylation) the guanidino nitrogens of arginyl residues in some proteins. This chain is Protein arginine N-methyltransferase PRMT10 (PRMT10), found in Oryza sativa subsp. japonica (Rice).